Consider the following 501-residue polypeptide: ATP synthase subunit alpha (501 aa).

169–176 (GDRQTGKT) lines the ATP pocket.

This sequence belongs to the ATPase alpha/beta chains family. F-type ATPases have 2 components, CF(1) - the catalytic core - and CF(0) - the membrane proton channel. CF(1) has five subunits: alpha(3), beta(3), gamma(1), delta(1), epsilon(1). CF(0) has three main subunits: a(1), b(2) and c(9-12). The alpha and beta chains form an alternating ring which encloses part of the gamma chain. CF(1) is attached to CF(0) by a central stalk formed by the gamma and epsilon chains, while a peripheral stalk is formed by the delta and b chains.

It localises to the cell membrane. The enzyme catalyses ATP + H2O + 4 H(+)(in) = ADP + phosphate + 5 H(+)(out). Its function is as follows. Produces ATP from ADP in the presence of a proton gradient across the membrane. The alpha chain is a regulatory subunit. The sequence is that of ATP synthase subunit alpha from Streptococcus pneumoniae (strain 70585).